We begin with the raw amino-acid sequence, 253 residues long: uncharacterized protein (253 aa).

It belongs to the herpesviridae BTRF1 family.

This is an uncharacterized protein from Saimiriine herpesvirus 2 (strain 11) (SaHV-2).